The following is a 411-amino-acid chain: Imidazolonepropionase (411 aa).

Fe(3+)-binding residues include H78 and H80. H78 and H80 together coordinate Zn(2+). Residues R87, Y150, and H183 each contribute to the 4-imidazolone-5-propanoate site. Y150 lines the N-formimidoyl-L-glutamate pocket. Position 248 (H248) interacts with Fe(3+). Residue H248 coordinates Zn(2+). Q251 provides a ligand contact to 4-imidazolone-5-propanoate. Fe(3+) is bound at residue D322. D322 is a binding site for Zn(2+). Residues N324 and G326 each coordinate N-formimidoyl-L-glutamate. Residue S327 coordinates 4-imidazolone-5-propanoate.

Belongs to the metallo-dependent hydrolases superfamily. HutI family. It depends on Zn(2+) as a cofactor. The cofactor is Fe(3+).

The protein localises to the cytoplasm. The catalysed reaction is 4-imidazolone-5-propanoate + H2O = N-formimidoyl-L-glutamate. Its pathway is amino-acid degradation; L-histidine degradation into L-glutamate; N-formimidoyl-L-glutamate from L-histidine: step 3/3. In terms of biological role, catalyzes the hydrolytic cleavage of the carbon-nitrogen bond in imidazolone-5-propanoate to yield N-formimidoyl-L-glutamate. It is the third step in the universal histidine degradation pathway. This chain is Imidazolonepropionase, found in Christiangramia forsetii (strain DSM 17595 / CGMCC 1.15422 / KT0803) (Gramella forsetii).